The following is a 359-amino-acid chain: MGGCVSATPEEREAKTRSSVIDRQQRQDARQYENTIKILLLGAGESGKSTVVKQMKIIHGDGYSQTEXRSFKSVIYGNLAASMRVVLNAMEKLGIPYGNQASQEQARVILSLSNSLSSYESFPPDVTSAFISLWRDAGVQECFSRAYEYQLNDSAPYYFQNMDRLLREDYVPDEQDVLRSRVQTTGIIETSFRVKQLTYRVVDVGGQRSERRKWIQCFDDVRAVLFVCALSGYDMTLFEDGKTNRLEESLNLFQAICNNKFFVKTSMILFLNKADLFRDKITNSDRHLRLYFTQYTGPDRDVEAASRFIQSEFMERNLNKQKIIYPHLTTATDTTNIKVVFGVVLDTIIRENLEAANLL.

Residues 1 to 26 (MGGCVSATPEEREAKTRSSVIDRQQR) are disordered. Glycine 2 carries N-myristoyl glycine lipidation. Cysteine 4 is lipidated: S-palmitoyl cysteine. Residues 34–359 (NTIKILLLGA…RENLEAANLL (326 aa)) enclose the G-alpha domain. The tract at residues 37-50 (KILLLGAGESGKST) is G1 motif. GTP is bound by residues 42 to 49 (GAGESGKS), 178 to 184 (LRSRVQT), 203 to 207 (DVGGQ), 272 to 275 (NKAD), and alanine 331. Residues serine 49 and threonine 184 each coordinate Mg(2+). Residues 176-184 (DVLRSRVQT) are G2 motif. The segment at 199-208 (YRVVDVGGQR) is G3 motif. Positions 268 to 275 (ILFLNKAD) are G4 motif. The segment at 329–334 (TTATDT) is G5 motif.

Belongs to the G-alpha family. G(i/o/t/z) subfamily. As to quaternary structure, g proteins are composed of 3 units; alpha, beta and gamma. The alpha chain contains the guanine nucleotide binding site.

Functionally, guanine nucleotide-binding proteins (G proteins) are involved as modulators or transducers in various transmembrane signaling systems. The G(o) protein function is not clear. In Geodia cydonium (Sponge), this protein is Guanine nucleotide-binding protein G(o) subunit alpha.